The chain runs to 344 residues: Lipase chaperone (344 aa).

A helical membrane pass occupies residues 14–34; it reads AVVYGVVGLAAIAGVAMWSGA.

Belongs to the lipase chaperone family.

It is found in the cell inner membrane. May be involved in the folding of the extracellular lipase during its passage through the periplasm. The polypeptide is Lipase chaperone (lifO) (Burkholderia cepacia (Pseudomonas cepacia)).